The primary structure comprises 193 residues: MFGLGLADVILERFKDFMREQPEPYKFLQVFYAQEKERFLNHKMSDYIKQNKSKEEASILARQGFVSAVGRALEKIIELLLKDFCIKNNVKMTNDKILRAKRINGELDRVKRALWVHFGEYSVLPDIILYQTNKDNIKILAILSVKNSFRERFTETPYWKLKLLQSPVTSHIKVFMITPDNDDEISFKDKPKG.

Belongs to the BsaWI type II restriction endonuclease family.

The enzyme catalyses Endonucleolytic cleavage of DNA to give specific double-stranded fragments with terminal 5'-phosphates.. Its function is as follows. A P subtype probable restriction enzyme that recognizes the double-stranded sequence CCGG; the cleavage site is unknown. In Helicobacter pylori (strain ATCC 700392 / 26695) (Campylobacter pylori), this protein is Probable type II restriction enzyme HpyAORF263P.